Reading from the N-terminus, the 173-residue chain is Transcription factor E (173 aa).

Residues 3-88 (NNPIIQQVLL…TWRATFTKLP (86 aa)) form the HTH TFE/IIEalpha-type domain.

The protein belongs to the TFE family. In terms of assembly, monomer. Interaction with RNA polymerase subunits RpoF and RpoE is necessary for Tfe stimulatory transcription activity. Able to interact with Tbp and RNA polymerase in the absence of DNA promoter. Interacts both with the preinitiation and elongation complexes.

Its function is as follows. Transcription factor that plays a role in the activation of archaeal genes transcribed by RNA polymerase. Facilitates transcription initiation by enhancing TATA-box recognition by TATA-box-binding protein (Tbp), and transcription factor B (Tfb) and RNA polymerase recruitment. Not absolutely required for transcription in vitro, but particularly important in cases where Tbp or Tfb function is not optimal. It dynamically alters the nucleic acid-binding properties of RNA polymerases by stabilizing the initiation complex and destabilizing elongation complexes. Seems to translocate with the RNA polymerase following initiation and acts by binding to the non template strand of the transcription bubble in elongation complexes. This is Transcription factor E from Methanococcus aeolicus (strain ATCC BAA-1280 / DSM 17508 / OCM 812 / Nankai-3).